Consider the following 539-residue polypeptide: Phenylacetyl-CoA ligase epaB (539 aa).

R188 to K199 is a binding site for AMP. Residues E449–K525 form an AMP-binding region.

It belongs to the ATP-dependent AMP-binding enzyme family.

It participates in secondary metabolite biosynthesis. Functionally, phenylacetyl-CoA ligase; part of the gene cluster that mediates the biosynthesis of nigerpyrone and its derivatives carbonarone A and pestalamide A. The biosynthesis pathway begins with the polyketide assembly by epaA to form phenylacetyl triketide precursor from successive condensation of two malonyl-CoA, presumably with one phenylacetyl-CoA starter unit produced by the phenylacetyl-CoA ligase epaB. For the nigerpyrone biosynthesis, the reactive polyketide chain is released as an aldehyde through the R-domain. A nonenzymatic cyclization and dehydration may create nigerpyrone. For the biosynthesis of carbonarone A and pestalamide A, an extra methyl group is added through the C-methyltransferase domain. Several further steps involving the dehydrogenase orf1, the cytochrome P450 monooxygenase orf2 and the FAD-dependent monooxygenase orf3 are required to form a carbonarone A precursor which is converted to carbonarone A via cyclization. The O-acetyltransferase epaC could catalyze the transfer of 2-methylsuccinyl-CoA, a common intermediate in the ethylmalonyl-CoA pathway, to generate the final product pestalamide A. This is Phenylacetyl-CoA ligase epaB from Aspergillus niger (strain ATCC MYA-4892 / CBS 513.88 / FGSC A1513).